Reading from the N-terminus, the 461-residue chain is MQIYNTLTRRKETFTPLDAGRVRMYVCGITVYDYCHIGHARVMVAFDMITRYLRWRGFEVDYVRNITDIDDKILKRAEENDEPIAALTERMIAAMHEDEGRLGVLRPDREPRATAHVDDIVAMVQRLIDKGYAYPAANGDVYYRVRRFEGYGKLSNRDLDDMRAGSRVEVETAKEDPLDFVLWKAAKPGEASWPSPWGDGRPGWHIECSAMSTCCLGDTFDIHGGGPDLVFPHHENEIAQSEAATGRPYVNTWMHAGAVRVDQEKMSKSLGNFFTIREVLEAHAPEVVRYLLLASHYRSPINYAPDALSDARRSLERFYNALQGVAPVAGEVAAGYRERFIAAMDDDFNTAEALAVLFDLARELNRAKQEAPAHAPALAHELKELGGVLGLFGQDPEGFLQAGAGRLPMSEEDIEARIEARAQAKKAKDFATADGIRDELAALGIVLKDGRDGTTWVVEGD.

C27 provides a ligand contact to Zn(2+). The short motif at 29 to 39 is the 'HIGH' region element; that stretch reads ITVYDYCHIGH. Positions 208, 233, and 237 each coordinate Zn(2+). A 'KMSKS' region motif is present at residues 265–269; sequence KMSKS. K268 contributes to the ATP binding site.

This sequence belongs to the class-I aminoacyl-tRNA synthetase family. Monomer. It depends on Zn(2+) as a cofactor.

The protein localises to the cytoplasm. It catalyses the reaction tRNA(Cys) + L-cysteine + ATP = L-cysteinyl-tRNA(Cys) + AMP + diphosphate. The sequence is that of Cysteine--tRNA ligase from Chromohalobacter salexigens (strain ATCC BAA-138 / DSM 3043 / CIP 106854 / NCIMB 13768 / 1H11).